The chain runs to 210 residues: Large ribosomal subunit protein uL3 (210 aa).

Residues 119 to 143 (GYQGNIKKDGQSRGPMAHGSRYHRR) are disordered.

Belongs to the universal ribosomal protein uL3 family. Part of the 50S ribosomal subunit. Forms a cluster with proteins L14 and L19.

One of the primary rRNA binding proteins, it binds directly near the 3'-end of the 23S rRNA, where it nucleates assembly of the 50S subunit. In Lacticaseibacillus casei (strain BL23) (Lactobacillus casei), this protein is Large ribosomal subunit protein uL3.